A 116-amino-acid chain; its full sequence is Ribonuclease P protein component (116 aa).

This sequence belongs to the RnpA family. Consists of a catalytic RNA component (M1 or rnpB) and a protein subunit.

It catalyses the reaction Endonucleolytic cleavage of RNA, removing 5'-extranucleotides from tRNA precursor.. RNaseP catalyzes the removal of the 5'-leader sequence from pre-tRNA to produce the mature 5'-terminus. It can also cleave other RNA substrates such as 4.5S RNA. The protein component plays an auxiliary but essential role in vivo by binding to the 5'-leader sequence and broadening the substrate specificity of the ribozyme. The sequence is that of Ribonuclease P protein component from Caldanaerobacter subterraneus subsp. tengcongensis (strain DSM 15242 / JCM 11007 / NBRC 100824 / MB4) (Thermoanaerobacter tengcongensis).